The chain runs to 526 residues: NAD(P)H-quinone oxidoreductase subunit 2 (526 aa).

The next 14 membrane-spanning stretches (helical) occupy residues 16 to 36, 43 to 63, 80 to 100, 110 to 130, 133 to 153, 168 to 188, 212 to 232, 246 to 266, 280 to 300, 308 to 328, 336 to 356, 380 to 400, 402 to 422, and 468 to 488; these read ILPE…DLIL, WTPY…YTQW, LSIA…LMSV, LGEF…LSGA, LVMI…LTGY, LLIG…LYGL, LALV…ISAV, PTPV…ALAI, WHFV…VVAL, LLAY…LANT, IFYL…VILF, LGLS…GFFG, IYLF…LGLI, and VGLI…NPLF.

It belongs to the complex I subunit 2 family. As to quaternary structure, NDH-1 can be composed of about 15 different subunits; different subcomplexes with different compositions have been identified which probably have different functions.

It localises to the cellular thylakoid membrane. The enzyme catalyses a plastoquinone + NADH + (n+1) H(+)(in) = a plastoquinol + NAD(+) + n H(+)(out). It carries out the reaction a plastoquinone + NADPH + (n+1) H(+)(in) = a plastoquinol + NADP(+) + n H(+)(out). Functionally, NDH-1 shuttles electrons from an unknown electron donor, via FMN and iron-sulfur (Fe-S) centers, to quinones in the respiratory and/or the photosynthetic chain. The immediate electron acceptor for the enzyme in this species is believed to be plastoquinone. Couples the redox reaction to proton translocation, and thus conserves the redox energy in a proton gradient. Cyanobacterial NDH-1 also plays a role in inorganic carbon-concentration. This chain is NAD(P)H-quinone oxidoreductase subunit 2, found in Trichodesmium erythraeum (strain IMS101).